A 123-amino-acid polypeptide reads, in one-letter code: Large ribosomal subunit protein uL29 (123 aa).

It belongs to the universal ribosomal protein uL29 family. In terms of assembly, component of the large ribosomal subunit.

Its subcellular location is the cytoplasm. In terms of biological role, component of the large ribosomal subunit. The ribosome is a large ribonucleoprotein complex responsible for the synthesis of proteins in the cell. This Xenopus tropicalis (Western clawed frog) protein is Large ribosomal subunit protein uL29 (rpl35).